We begin with the raw amino-acid sequence, 418 residues long: Sprouty-related, EVH1 domain-containing protein 2 (418 aa).

Residues 5 to 122 enclose the WH1 domain; sequence THPDDDSYIV…RGVRKAIEDL (118 aa). The tract at residues 127–171 is disordered; the sequence is TTSSSTIHNEAELGDDDVFTTATDSSSNSSQKREQPTRTISSPTS. Positions 146–156 are enriched in polar residues; sequence TTATDSSSNSS. In terms of domain architecture, KBD spans 201–257; the sequence is PYRQVSFPDDDEEIVRINPREKIWMTGYEDYRHAPVRGKYPDPSEDADSSYVRFAKG. Ser206 carries the phosphoserine modification. Phosphotyrosine is present on residues Tyr228 and Tyr231. A disordered region spans residues 275-302; the sequence is GLGEDPKGRGGSVIKTQPSRGKSRRRKE. Residues 308–416 enclose the SPR domain; that stretch reads RCVYCRDMFN…CRCCGGKHKA (109 aa).

As to quaternary structure, homodimer and heterodimer. Able to interact with SPRED1 to form heterodimers. Interacts with RAS. May interact with ZDHHC13 (via ANK repeats) and ZDHHC17 (via ANK repeats). Interacts with TESK1. Interacts with NF1. In terms of processing, phosphorylated on serine and threonine residues. Phosphorylated on tyrosine. Phosphorylation of Tyr-228 and Tyr-231 are required for ubiquitination. Post-translationally, ubiquitinated; leading to degradation by the proteasome. In terms of tissue distribution, expressed in liver, skin, small intestine, salivary gland and prostate.

The protein localises to the cell membrane. It localises to the cytoplasmic vesicle. The protein resides in the secretory vesicle membrane. Its subcellular location is the cytoplasm. In terms of biological role, negatively regulates Ras signaling pathways and downstream activation of MAP kinases. Recruits and translocates NF1 to the cell membrane, thereby enabling NF1-dependent hydrolysis of active GTP-bound Ras to inactive GDP-bound Ras. Inhibits fibroblast growth factor (FGF)-induced retinal lens fiber differentiation, probably by inhibiting FGF-mediated phosphorylation of ERK1/2. Inhibits TGFB-induced epithelial-to-mesenchymal transition in lens epithelial cells. The protein is Sprouty-related, EVH1 domain-containing protein 2 (SPRED2) of Homo sapiens (Human).